We begin with the raw amino-acid sequence, 37 residues long: Large ribosomal subunit protein bL36 (37 aa).

It belongs to the bacterial ribosomal protein bL36 family.

In Paracidovorax citrulli (strain AAC00-1) (Acidovorax citrulli), this protein is Large ribosomal subunit protein bL36.